The primary structure comprises 473 residues: Photosystem II CP43 reaction center protein (473 aa).

The propeptide occupies 1 to 14; sequence MKTLYSLRRFYPVE. Thr-15 is modified (N-acetylthreonine). Thr-15 is subject to Phosphothreonine. 5 helical membrane-spanning segments follow: residues 69–93, 134–155, 178–200, 255–275, and 291–312; these read LFEVAHFVPEKPMYEQGLILLPHLA, LLGPETLEESFPFFGYVWKDRN, KALYFGGVYDTWAPGGGDVRKIT, KPFAWARRALVWSGEAYLSYS, and WFNNTAYPSEFYGPTGPEASQA. Glu-367 serves as a coordination point for [CaMn4O5] cluster. Residues 447–471 traverse the membrane as a helical segment; that stretch reads RARAAAAGFEKGIDRDFEPVLSMTP.

This sequence belongs to the PsbB/PsbC family. PsbC subfamily. PSII is composed of 1 copy each of membrane proteins PsbA, PsbB, PsbC, PsbD, PsbE, PsbF, PsbH, PsbI, PsbJ, PsbK, PsbL, PsbM, PsbT, PsbX, PsbY, PsbZ, Psb30/Ycf12, at least 3 peripheral proteins of the oxygen-evolving complex and a large number of cofactors. It forms dimeric complexes. The cofactor is Binds multiple chlorophylls and provides some of the ligands for the Ca-4Mn-5O cluster of the oxygen-evolving complex. It may also provide a ligand for a Cl- that is required for oxygen evolution. PSII binds additional chlorophylls, carotenoids and specific lipids..

It is found in the plastid. It localises to the chloroplast thylakoid membrane. Its function is as follows. One of the components of the core complex of photosystem II (PSII). It binds chlorophyll and helps catalyze the primary light-induced photochemical processes of PSII. PSII is a light-driven water:plastoquinone oxidoreductase, using light energy to abstract electrons from H(2)O, generating O(2) and a proton gradient subsequently used for ATP formation. This chain is Photosystem II CP43 reaction center protein, found in Eucalyptus globulus subsp. globulus (Tasmanian blue gum).